We begin with the raw amino-acid sequence, 888 residues long: Protein translocase subunit SecA (888 aa).

ATP is bound by residues Q81, 99-103 (GEGKT), and D489.

Belongs to the SecA family.

It is found in the plastid. Its subcellular location is the chloroplast stroma. The protein resides in the chloroplast thylakoid membrane. It catalyses the reaction ATP + H2O + cellular proteinSide 1 = ADP + phosphate + cellular proteinSide 2.. Its function is as follows. Has a central role in coupling the hydrolysis of ATP to the transfer of proteins across the thylakoid membrane. The protein is Protein translocase subunit SecA of Trieres chinensis (Marine centric diatom).